Here is a 130-residue protein sequence, read N- to C-terminus: L-ectoine synthase (130 aa).

This sequence belongs to the ectoine synthase family.

It carries out the reaction (2S)-4-acetamido-2-aminobutanoate = L-ectoine + H2O. It functions in the pathway amine and polyamine biosynthesis; ectoine biosynthesis; L-ectoine from L-aspartate 4-semialdehyde: step 3/3. Its function is as follows. Catalyzes the circularization of gamma-N-acetyl-alpha,gamma-diaminobutyric acid (ADABA) to ectoine (1,4,5,6-tetrahydro-2-methyl-4-pyrimidine carboxylic acid), which is an excellent osmoprotectant. The polypeptide is L-ectoine synthase (Mycolicibacterium vanbaalenii (strain DSM 7251 / JCM 13017 / BCRC 16820 / KCTC 9966 / NRRL B-24157 / PYR-1) (Mycobacterium vanbaalenii)).